A 264-amino-acid chain; its full sequence is Thymidylate synthase (264 aa).

Arginine 21 serves as a coordination point for dUMP. Histidine 51 is a binding site for (6R)-5,10-methylene-5,6,7,8-tetrahydrofolate. Residue 126-127 (RR) coordinates dUMP. Cysteine 146 acts as the Nucleophile in catalysis. Residues 166 to 169 (RSAD), asparagine 177, and 207 to 209 (HLY) contribute to the dUMP site. Aspartate 169 is a (6R)-5,10-methylene-5,6,7,8-tetrahydrofolate binding site. Alanine 263 is a (6R)-5,10-methylene-5,6,7,8-tetrahydrofolate binding site.

This sequence belongs to the thymidylate synthase family. Bacterial-type ThyA subfamily. Homodimer.

The protein resides in the cytoplasm. It carries out the reaction dUMP + (6R)-5,10-methylene-5,6,7,8-tetrahydrofolate = 7,8-dihydrofolate + dTMP. It participates in pyrimidine metabolism; dTTP biosynthesis. Functionally, catalyzes the reductive methylation of 2'-deoxyuridine-5'-monophosphate (dUMP) to 2'-deoxythymidine-5'-monophosphate (dTMP) while utilizing 5,10-methylenetetrahydrofolate (mTHF) as the methyl donor and reductant in the reaction, yielding dihydrofolate (DHF) as a by-product. This enzymatic reaction provides an intracellular de novo source of dTMP, an essential precursor for DNA biosynthesis. The sequence is that of Thymidylate synthase from Methylobacterium nodulans (strain LMG 21967 / CNCM I-2342 / ORS 2060).